A 186-amino-acid chain; its full sequence is Ribosome-recycling factor (186 aa).

Belongs to the RRF family.

Its subcellular location is the cytoplasm. Responsible for the release of ribosomes from messenger RNA at the termination of protein biosynthesis. May increase the efficiency of translation by recycling ribosomes from one round of translation to another. The sequence is that of Ribosome-recycling factor from Janthinobacterium sp. (strain Marseille) (Minibacterium massiliensis).